We begin with the raw amino-acid sequence, 255 residues long: Ribonuclease HII (255 aa).

Positions 72–255 (RLIAGVDEVG…KTFAPVQSFR (184 aa)) constitute an RNase H type-2 domain. 3 residues coordinate a divalent metal cation: Asp78, Glu79, and Asp170.

It belongs to the RNase HII family. The cofactor is Mn(2+). It depends on Mg(2+) as a cofactor.

Its subcellular location is the cytoplasm. It catalyses the reaction Endonucleolytic cleavage to 5'-phosphomonoester.. Its function is as follows. Endonuclease that specifically degrades the RNA of RNA-DNA hybrids. The sequence is that of Ribonuclease HII (rnhB) from Bacillus subtilis (strain 168).